The following is a 299-amino-acid chain: Protoheme IX farnesyltransferase (299 aa).

A run of 9 helical transmembrane segments spans residues 17–37 (VVALILLTAEVGMFLAVPAPY), 41–61 (GLLVLSASIGISMAAASAAVF), 91–111 (ALMWGVFLGLVGLGILQLFVN), 113–133 (ITMVLTFVSLIGYAIIYTLYL), 141–161 (IVIGGAAGAAPPVLGWTAVSG), 168–188 (ACLLFLIVFIWTPPHFWALAI), 207–227 (GLAYTRTQILLYTVLLLLVSL), 228–248 (LPYLASMSGLIYLVVAIALGI), and 266–286 (IAWCTFVYSINYLMLLFVTLL).

It belongs to the UbiA prenyltransferase family. Protoheme IX farnesyltransferase subfamily.

Its subcellular location is the cell inner membrane. It catalyses the reaction heme b + (2E,6E)-farnesyl diphosphate + H2O = Fe(II)-heme o + diphosphate. The protein operates within porphyrin-containing compound metabolism; heme O biosynthesis; heme O from protoheme: step 1/1. In terms of biological role, converts heme B (protoheme IX) to heme O by substitution of the vinyl group on carbon 2 of heme B porphyrin ring with a hydroxyethyl farnesyl side group. This chain is Protoheme IX farnesyltransferase, found in Ruthia magnifica subsp. Calyptogena magnifica.